The sequence spans 486 residues: Serine/threonine-protein phosphatase 2A 56 kDa regulatory subunit alpha isoform (486 aa).

Residues 1–18 (MSSSSPPAGAASAAISAS) show a composition bias toward low complexity. The interval 1 to 52 (MSSSSPPAGAASAAISASEKVDGFTRKSVRKAQRQKRSQGSSQFRSQGSQAE) is disordered. Ser-2 carries the post-translational modification N-acetylserine. Residues 27–37 (KSVRKAQRQKR) are compositionally biased toward basic residues. Residues 38 to 51 (SQGSSQFRSQGSQA) show a composition bias toward low complexity. A phosphoserine mark is found at Ser-41, Ser-42, and Ser-49.

It belongs to the phosphatase 2A regulatory subunit B56 family. In terms of assembly, PP2A consists of a common heterodimeric core enzyme, composed of a 36 kDa catalytic subunit (subunit C) and a 65 kDa constant regulatory subunit (PR65 or subunit A), that associates with a variety of regulatory subunits. Proteins that associate with the core dimer include three families of regulatory subunits B (the R2/B/PR55/B55, R3/B''/PR72/PR130/PR59 and R5/B'/B56 families), the 48 kDa variable regulatory subunit, viral proteins, and cell signaling molecules. Interacts with SGO1. In terms of processing, phosphorylated on serine residues. As to expression, widely expressed with the highest expression in heart and skeletal muscle.

It localises to the cytoplasm. The protein resides in the nucleus. The protein localises to the chromosome. Its subcellular location is the centromere. Its function is as follows. The B regulatory subunit might modulate substrate selectivity and catalytic activity, and might also direct the localization of the catalytic enzyme to a particular subcellular compartment. This chain is Serine/threonine-protein phosphatase 2A 56 kDa regulatory subunit alpha isoform (PPP2R5A), found in Homo sapiens (Human).